The chain runs to 368 residues: 1-aminocyclopropane-1-carboxylate synthase (368 aa).

N6-(pyridoxal phosphate)lysine is present on Lys-230.

The protein belongs to the class-I pyridoxal-phosphate-dependent aminotransferase family. In terms of assembly, homodimer. Pyridoxal 5'-phosphate serves as cofactor.

It catalyses the reaction S-adenosyl-L-methionine = 1-aminocyclopropane-1-carboxylate + S-methyl-5'-thioadenosine + H(+). It functions in the pathway alkene biosynthesis; ethylene biosynthesis via S-adenosyl-L-methionine; ethylene from S-adenosyl-L-methionine: step 1/2. In terms of biological role, catalyzes the formation of 1-aminocyclopropane-1-carboxylate, a direct precursor of ethylene in higher plants. This chain is 1-aminocyclopropane-1-carboxylate synthase (ACS5), found in Vigna radiata var. radiata (Mung bean).